The chain runs to 1163 residues: DNA-directed RNA polymerase subunit beta 2 (1163 aa).

It belongs to the RNA polymerase beta chain family. As to quaternary structure, the RNAP catalytic core consists of 2 alpha, 1 beta, 1 beta' and 1 omega subunit. When a sigma factor is associated with the core the holoenzyme is formed, which can initiate transcription.

It carries out the reaction RNA(n) + a ribonucleoside 5'-triphosphate = RNA(n+1) + diphosphate. Its function is as follows. DNA-dependent RNA polymerase catalyzes the transcription of DNA into RNA using the four ribonucleoside triphosphates as substrates. This chain is DNA-directed RNA polymerase subunit beta 2, found in Nocardia farcinica (strain IFM 10152).